Reading from the N-terminus, the 150-residue chain is Large ribosomal subunit protein bL9 (150 aa).

The protein belongs to the bacterial ribosomal protein bL9 family.

In terms of biological role, binds to the 23S rRNA. The polypeptide is Large ribosomal subunit protein bL9 (Vesicomyosocius okutanii subsp. Calyptogena okutanii (strain HA)).